The chain runs to 393 residues: Chalcone synthase LF2 (393 aa).

Cysteine 164 is a catalytic residue.

Belongs to the thiolase-like superfamily. Chalcone/stilbene synthases family.

It catalyses the reaction (E)-4-coumaroyl-CoA + 3 malonyl-CoA + 3 H(+) = 2',4,4',6'-tetrahydroxychalcone + 3 CO2 + 4 CoA. The protein operates within secondary metabolite biosynthesis; flavonoid biosynthesis. In terms of biological role, the primary product of this enzyme is 4,2',4',6'-tetrahydroxychalcone (also termed naringenin-chalcone or chalcone) which can under specific conditions spontaneously isomerize into naringenin. This chain is Chalcone synthase LF2 (CHS-LF2), found in Ipomoea batatas (Sweet potato).